A 231-amino-acid polypeptide reads, in one-letter code: NDR1/HIN1-like protein 3 (231 aa).

A helical membrane pass occupies residues 47–67; that stretch reads VIFNILITIAVLLGIAALIIW. 4 N-linked (GlcNAc...) asparagine glycosylation sites follow: asparagine 102, asparagine 135, asparagine 145, and asparagine 215.

As to quaternary structure, may form oligomers or be a component of larger protein complex in plasma membranes. Post-translationally, glycosylated. In terms of tissue distribution, expressed in roots, young and senescing leaves, cauline leaves, stems and siliques.

It is found in the cell membrane. Its function is as follows. Confers resistance to Pseudomonas syringae pv. tomato DC3000 (Pst DC3000). This chain is NDR1/HIN1-like protein 3, found in Arabidopsis thaliana (Mouse-ear cress).